A 204-amino-acid chain; its full sequence is Protein FAM167A (204 aa).

The interval 58–80 (GLAVSDGSTELEKDAGLKPRATP) is disordered. A coiled-coil region spans residues 113–146 (LRKELMEMRIQDQQLARQLMRLRGDINKLKVEQT).

It belongs to the FAM167 (SEC) family.

This Danio rerio (Zebrafish) protein is Protein FAM167A (fam167a).